The chain runs to 571 residues: Glutamate--tRNA ligase (571 aa).

The 'HIGH' region motif lies at 110 to 120 (PNPNGPGTLGS).

The protein belongs to the class-I aminoacyl-tRNA synthetase family. Glutamate--tRNA ligase type 2 subfamily.

Its subcellular location is the cytoplasm. It catalyses the reaction tRNA(Glu) + L-glutamate + ATP = L-glutamyl-tRNA(Glu) + AMP + diphosphate. Its function is as follows. Catalyzes the attachment of glutamate to tRNA(Glu) in a two-step reaction: glutamate is first activated by ATP to form Glu-AMP and then transferred to the acceptor end of tRNA(Glu). In Methanosarcina acetivorans (strain ATCC 35395 / DSM 2834 / JCM 12185 / C2A), this protein is Glutamate--tRNA ligase.